Here is a 222-residue protein sequence, read N- to C-terminus: N-(5'-phosphoribosyl)anthranilate isomerase (222 aa).

This sequence belongs to the TrpF family.

The catalysed reaction is N-(5-phospho-beta-D-ribosyl)anthranilate = 1-(2-carboxyphenylamino)-1-deoxy-D-ribulose 5-phosphate. Its pathway is amino-acid biosynthesis; L-tryptophan biosynthesis; L-tryptophan from chorismate: step 3/5. The sequence is that of N-(5'-phosphoribosyl)anthranilate isomerase from Xanthomonas euvesicatoria pv. vesicatoria (strain 85-10) (Xanthomonas campestris pv. vesicatoria).